A 266-amino-acid chain; its full sequence is Calpain small subunit 1 (266 aa).

The residue at position 1 (Met-1) is an N-acetylmethionine. Ser-6 carries the post-translational modification Phosphoserine. An EF-hand 1; atypical domain is found at 94-128 (EEVRQFRRLFAQLAGDDMEVSATELMNILNKVVTR). 10 residues coordinate Ca(2+): Ala-107, Asp-110, Glu-112, Glu-117, Asp-135, Asp-150, Asp-152, Thr-154, Lys-156, and Glu-161. EF-hand domains lie at 137–170 (FGLD…NNIK), 167–202 (NNIK…AGFH), 203–231 (LNEH…ISCL), and 232–266 (VRLD…TMYS). Lys-177 carries the N6-acetyllysine modification. Residues Asp-180, Asp-182, Ser-184, Thr-186, Glu-191, and Asp-223 each contribute to the Ca(2+) site.

As to quaternary structure, homodimer or heterodimer of a large (catalytic) and a small (regulatory) subunit. In presence of calcium, the heterodimer dissociates. The N-terminus is blocked.

The protein resides in the cytoplasm. The protein localises to the cell membrane. In terms of biological role, regulatory subunit of the calcium-regulated non-lysosomal thiol-protease which catalyzes limited proteolysis of substrates involved in cytoskeletal remodeling and signal transduction. Essential for embryonic development. This Oryctolagus cuniculus (Rabbit) protein is Calpain small subunit 1 (CAPNS1).